We begin with the raw amino-acid sequence, 124 residues long: Fluoride-specific ion channel FluC (124 aa).

The next 3 membrane-spanning stretches (helical) occupy residues 20-40 (LLSI…TLLV), 60-80 (ISPE…TTFS), and 102-122 (VLLN…LIFS). The Na(+) site is built by G74 and T77.

The protein belongs to the fluoride channel Fluc/FEX (TC 1.A.43) family.

It localises to the cell inner membrane. It catalyses the reaction fluoride(in) = fluoride(out). Its activity is regulated as follows. Na(+) is not transported, but it plays an essential structural role and its presence is essential for fluoride channel function. Functionally, fluoride-specific ion channel. Important for reducing fluoride concentration in the cell, thus reducing its toxicity. In Shewanella frigidimarina (strain NCIMB 400), this protein is Fluoride-specific ion channel FluC.